The chain runs to 537 residues: Arginine--tRNA ligase (537 aa).

The short motif at 113–123 (ANPTGRIHLGH) is the 'HIGH' region element.

This sequence belongs to the class-I aminoacyl-tRNA synthetase family. As to quaternary structure, monomer.

The protein localises to the cytoplasm. The enzyme catalyses tRNA(Arg) + L-arginine + ATP = L-arginyl-tRNA(Arg) + AMP + diphosphate. The sequence is that of Arginine--tRNA ligase (argS) from Mycoplasma genitalium (strain ATCC 33530 / DSM 19775 / NCTC 10195 / G37) (Mycoplasmoides genitalium).